The following is a 222-amino-acid chain: Collectrin (222 aa).

Positions 1–14 are cleaved as a signal peptide; that stretch reads MLWALFFLVTTIHA. Residues 15 to 141 are Extracellular-facing; the sequence is ELCRPDAENA…LAPPMDPSVP (127 aa). In terms of domain architecture, Collectrin-like spans 21-222; it reads AENAFKVRLS…LTEDERLTPL (202 aa). Asn-76 and Asn-93 each carry an N-linked (GlcNAc...) asparagine glycan. The helical transmembrane segment at 142 to 162 threads the bilayer; it reads VWIIVFGVIFCIVTVAIALLV. Over 163 to 222 the chain is Cytoplasmic; the sequence is LSGIRQRRRNKKGPPGVEDAEDKCENIITIENGIPCDPLDMKGGHINDGFLTEDERLTPL. Phosphothreonine is present on residues Thr-214 and Thr-220.

The protein belongs to the CLTRN family. Monomer. Homodimer; dimerization prevents CLTRN cleavage by BACE2. Interacts with SLC6A18; this interaction regulates the trafficking of SLC6A18 to the cell membrane and its amino acid transporter activity. Interacts with SLC6A19; this interaction regulates the trafficking of SLC6A19 to the cell membrane and its amino acid transporter activity. Interacts with SNAPIN. Post-translationally, glycosylated. Glycosylation is required for plasma membrane localization and for its cleavage by BACE2. In terms of processing, proteolytically processed in pancreatic beta cells by BACE2 leading to the generation and extracellular release of soluble CLTRN, and a corresponding cell-associated C-terminal fragment which is later cleaved by gamma-secretase. This shedding process inactivates CLTRN. Three cleavage sites have been identified for BACE2, two clustered sites after Phe-116 and Leu-118 and a more membrane proximal site at Phe-125; the preferred BACE2 cleavage site seems to be between Phe-125 and Leu-126, Phe-116 and Leu-118 act as alternative sites. As to expression, kidney; collecting ducts. Pancreas; beta cells of islets.

Its subcellular location is the cell membrane. In terms of biological role, plays an important role in amino acid transport by acting as binding partner of amino acid transporters SLC6A18 and SLC6A19, regulating their trafficking on the cell surface and their activity. May also play a role in trafficking of amino acid transporters SLC3A1 and SLC7A9 to the renal cortical cell membrane. Regulator of SNARE complex function. Stimulator of beta cell replication. In Rattus norvegicus (Rat), this protein is Collectrin.